Reading from the N-terminus, the 140-residue chain is MKEKTPFKNEKEFHDMVKKTKKGTFSGWYIVNPENNSVEFSGNFNRQFKLNKPVIPVNTEYVTRKEFNEYKDSNDQRLIKIETTLAAQGEQIRIQGEQIKELQIEQKAQSETLKLILQTLQKMSDRLDKMDVRLDKLESK.

It belongs to the UPF0134 family.

The sequence is that of UPF0134 protein MPN_130 from Mycoplasma pneumoniae (strain ATCC 29342 / M129 / Subtype 1) (Mycoplasmoides pneumoniae).